The primary structure comprises 297 residues: 4-diphosphocytidyl-2-C-methyl-D-erythritol kinase (297 aa).

Catalysis depends on residues lysine 6 and aspartate 144.

The protein belongs to the GHMP kinase family. IspE subfamily.

It carries out the reaction 4-CDP-2-C-methyl-D-erythritol + ATP = 4-CDP-2-C-methyl-D-erythritol 2-phosphate + ADP + H(+). It participates in isoprenoid biosynthesis; isopentenyl diphosphate biosynthesis via DXP pathway; isopentenyl diphosphate from 1-deoxy-D-xylulose 5-phosphate: step 3/6. In terms of biological role, catalyzes the phosphorylation of the position 2 hydroxy group of 4-diphosphocytidyl-2C-methyl-D-erythritol. The protein is 4-diphosphocytidyl-2-C-methyl-D-erythritol kinase of Leptospira interrogans serogroup Icterohaemorrhagiae serovar copenhageni (strain Fiocruz L1-130).